The sequence spans 805 residues: Cell division cycle protein 48 homolog (805 aa).

ATP-binding positions include 249–256 (GPPGSGKT) and 522–529 (GPPGCGKT). Residues 783–805 (GATAAADPFATSNAAADDDDLYS) are disordered.

Belongs to the AAA ATPase family.

Functionally, probably functions in cell division and growth processes. The chain is Cell division cycle protein 48 homolog (CAFP) from Capsicum annuum (Capsicum pepper).